Reading from the N-terminus, the 209-residue chain is Large ribosomal subunit protein uL3 (209 aa).

The disordered stretch occupies residues 128–152; sequence QARGPMSHGSRYHRRPGSMGPVDPN.

Belongs to the universal ribosomal protein uL3 family. As to quaternary structure, part of the 50S ribosomal subunit. Forms a cluster with proteins L14 and L19.

In terms of biological role, one of the primary rRNA binding proteins, it binds directly near the 3'-end of the 23S rRNA, where it nucleates assembly of the 50S subunit. The chain is Large ribosomal subunit protein uL3 from Halalkalibacterium halodurans (strain ATCC BAA-125 / DSM 18197 / FERM 7344 / JCM 9153 / C-125) (Bacillus halodurans).